Reading from the N-terminus, the 96-residue chain is UPF0235 protein YPK_0828 (96 aa).

Belongs to the UPF0235 family.

The chain is UPF0235 protein YPK_0828 from Yersinia pseudotuberculosis serotype O:3 (strain YPIII).